The primary structure comprises 521 residues: Protein NRT1/ PTR FAMILY 4.2 (521 aa).

12 consecutive transmembrane segments (helical) span residues 30-50 (IVCVVVMMENIVFIANGFNFV), 65-85 (ANMVTNFMGTSFLLTLFGGFI), 89-109 (FVTHFTTFIVFCCIELMGLIL), 133-153 (AILFTGLYAMAIGTGGLKASL), 172-192 (FFDWLYFSICSGCLLAVTVVL), 204-224 (FNISVGILATALCIFTVGLPF), 297-317 (FLGLLPIFGSTIVMSCCVAQL), 338-358 (IPVPSLTAIPLIFMLLSIPLY), 381-401 (IGLGLALSSVSMAVSAIVEAK), 413-433 (ISVLWLVFQYLMLSVSDMLTL), 451-471 (ISTALGWCSTALGFFLSTTLV), and 498-518 (LFYVLLCVLNTLNLLNYIFWA).

This sequence belongs to the major facilitator superfamily. Proton-dependent oligopeptide transporter (POT/PTR) (TC 2.A.17) family. As to expression, expressed in siliques.

It is found in the membrane. Functionally, involved in abscisic acid transport. The sequence is that of Protein NRT1/ PTR FAMILY 4.2 (NPF4.2) from Arabidopsis thaliana (Mouse-ear cress).